Reading from the N-terminus, the 267-residue chain is Pyridoxine 5'-phosphate synthase (267 aa).

Asparagine 8 provides a ligand contact to 3-amino-2-oxopropyl phosphate. 10-11 (DH) is a 1-deoxy-D-xylulose 5-phosphate binding site. A 3-amino-2-oxopropyl phosphate-binding site is contributed by arginine 19. Histidine 44 serves as the catalytic Proton acceptor. Arginine 46 and histidine 51 together coordinate 1-deoxy-D-xylulose 5-phosphate. Catalysis depends on glutamate 71, which acts as the Proton acceptor. Position 101 (threonine 101) interacts with 1-deoxy-D-xylulose 5-phosphate. Histidine 219 acts as the Proton donor in catalysis. 3-amino-2-oxopropyl phosphate is bound by residues glycine 220 and 241 to 242 (GH).

This sequence belongs to the PNP synthase family. In terms of assembly, homooctamer; tetramer of dimers.

It localises to the cytoplasm. It catalyses the reaction 3-amino-2-oxopropyl phosphate + 1-deoxy-D-xylulose 5-phosphate = pyridoxine 5'-phosphate + phosphate + 2 H2O + H(+). It functions in the pathway cofactor biosynthesis; pyridoxine 5'-phosphate biosynthesis; pyridoxine 5'-phosphate from D-erythrose 4-phosphate: step 5/5. In terms of biological role, catalyzes the complicated ring closure reaction between the two acyclic compounds 1-deoxy-D-xylulose-5-phosphate (DXP) and 3-amino-2-oxopropyl phosphate (1-amino-acetone-3-phosphate or AAP) to form pyridoxine 5'-phosphate (PNP) and inorganic phosphate. The chain is Pyridoxine 5'-phosphate synthase from Helicobacter hepaticus (strain ATCC 51449 / 3B1).